Consider the following 466-residue polypeptide: MGFLAIVLSVALLFRSTSGTPLGPRGKHSDCNSVDHGYQCFPELSHKWGLYAPYFSLQDESPFPLDVPEDCHITFVQVLARHGARSPTHSKTKAYAATIAAIQKSATAFPGKYAFLQSYNYSLDSEELTPFGRNQLRDLGAQFYERYNALTRHINPFVRATDASRVHESAEKFVEGFQTARQDDHHANPHQPSPRVDVAIPEGSAYNNTLEHSLCTAFESSTVGDDAVANFTAVFAPAIAQRLEADLPGVQLSTDDVVNLMAMCPFETVSLTDDAHTLSPFCDLFTATEWTQYNYLLSLDKYYGYGGGNPLGPVQGVGWANELMARLTRAPVHDHTCVNNTLDASPATFPLNATLYADFSHDSNLVSIFWALGLYNGTAPLSQTSVESVSQTDGYAAAWTVPFAARAYVEMMQCRAEKEPLVRVLVNDRVMPLHGCPTDKLGRCKRDAFVAGLSFAQAGGNWADCF.

An N-terminal signal peptide occupies residues 1 to 19 (MGFLAIVLSVALLFRSTSG). Cys31 and Cys40 form a disulfide bridge. The 1D-myo-inositol hexakisphosphate site is built by Tyr51, Arg81, His82, Arg85, and Thr88. Disulfide bonds link Cys71-Cys414, Cys215-Cys465, Cys264-Cys282, and Cys436-Cys444. His82 acts as the Nucleophile in catalysis. Residue Asn120 is glycosylated (N-linked (GlcNAc...) asparagine). Residue Arg165 coordinates 1D-myo-inositol hexakisphosphate. N-linked (GlcNAc...) asparagine glycans are attached at residues Asn207 and Asn230. Lys301 contacts 1D-myo-inositol hexakisphosphate. Residues Asn339 and Asn352 are each glycosylated (N-linked (GlcNAc...) asparagine). 1D-myo-inositol hexakisphosphate contacts are provided by His361 and Asp362. N-linked (GlcNAc...) asparagine glycosylation is present at Asn376.

It belongs to the histidine acid phosphatase family. As to quaternary structure, monomer.

It is found in the secreted. It catalyses the reaction 1D-myo-inositol hexakisphosphate + H2O = 1D-myo-inositol 1,2,4,5,6-pentakisphosphate + phosphate. It carries out the reaction 1D-myo-inositol 1,2,4,5,6-pentakisphosphate + H2O = 1D-myo-inositol 1,2,5,6-tetrakisphosphate + phosphate. The enzyme catalyses 1D-myo-inositol 1,2,5,6-tetrakisphosphate + H2O = 1D-myo-inositol 1,2,6-trisphosphate + phosphate. The catalysed reaction is 1D-myo-inositol 1,2,6-trisphosphate + H2O = 1D-myo-inositol 1,2-bisphosphate + phosphate. It catalyses the reaction 1D-myo-inositol 1,2-bisphosphate + H2O = 1D-myo-inositol 2-phosphate + phosphate. In terms of biological role, catalyzes the phosphate monoester hydrolysis of phytic acid (myo-inositol hexakisphosphate), which results in the stepwise formation of myo-inositol pentakis-, tetrakis-, tris-, bis-, and monophosphates, as well as the liberation of inorganic phosphate. Myo-inositol 2-monophosphate is the end product. Has a broad substrate specificity and is also able to dephosphorylate other classic acid phosphatase substrates such as p-nitrophenyl phosphate, phenyl phosphate, fructose 1,6-bisphosphate, glucose 6-phosphate, 3-phosphoglycerate, as well as ADP and ATP. The chain is Phytase A from Aspergillus terreus.